We begin with the raw amino-acid sequence, 183 residues long: Large ribosomal subunit protein uL5 (183 aa).

This sequence belongs to the universal ribosomal protein uL5 family. As to quaternary structure, part of the 50S ribosomal subunit; contacts the 5S rRNA and probably tRNA. Forms a bridge to the 30S subunit in the 70S ribosome.

This is one of the proteins that bind and probably mediate the attachment of the 5S RNA into the large ribosomal subunit, where it forms part of the central protuberance. In the 70S ribosome it contacts protein S13 of the 30S subunit (bridge B1b), connecting the 2 subunits; this bridge is implicated in subunit movement. May contact the P site tRNA; the 5S rRNA and some of its associated proteins might help stabilize positioning of ribosome-bound tRNAs. This chain is Large ribosomal subunit protein uL5, found in Thermococcus kodakarensis (strain ATCC BAA-918 / JCM 12380 / KOD1) (Pyrococcus kodakaraensis (strain KOD1)).